The primary structure comprises 272 residues: 2-dehydro-3-deoxyphosphooctonate aldolase (272 aa).

It belongs to the KdsA family.

It is found in the cytoplasm. It catalyses the reaction D-arabinose 5-phosphate + phosphoenolpyruvate + H2O = 3-deoxy-alpha-D-manno-2-octulosonate-8-phosphate + phosphate. Its pathway is carbohydrate biosynthesis; 3-deoxy-D-manno-octulosonate biosynthesis; 3-deoxy-D-manno-octulosonate from D-ribulose 5-phosphate: step 2/3. It functions in the pathway bacterial outer membrane biogenesis; lipopolysaccharide biosynthesis. This Geobacter metallireducens (strain ATCC 53774 / DSM 7210 / GS-15) protein is 2-dehydro-3-deoxyphosphooctonate aldolase.